Reading from the N-terminus, the 282-residue chain is Ribosomal RNA small subunit methyltransferase A (282 aa).

6 residues coordinate S-adenosyl-L-methionine: Asn28, Leu30, Gly55, Glu77, Asp103, and Asn123.

Belongs to the class I-like SAM-binding methyltransferase superfamily. rRNA adenine N(6)-methyltransferase family. RsmA subfamily.

It is found in the cytoplasm. It catalyses the reaction adenosine(1518)/adenosine(1519) in 16S rRNA + 4 S-adenosyl-L-methionine = N(6)-dimethyladenosine(1518)/N(6)-dimethyladenosine(1519) in 16S rRNA + 4 S-adenosyl-L-homocysteine + 4 H(+). Its function is as follows. Specifically dimethylates two adjacent adenosines (A1518 and A1519) in the loop of a conserved hairpin near the 3'-end of 16S rRNA in the 30S particle. May play a critical role in biogenesis of 30S subunits. This Afipia carboxidovorans (strain ATCC 49405 / DSM 1227 / KCTC 32145 / OM5) (Oligotropha carboxidovorans) protein is Ribosomal RNA small subunit methyltransferase A.